Consider the following 225-residue polypeptide: GTP-binding nuclear protein Ran (225 aa).

Residues 8-172 (VVAEFKLVLV…LWILRKLTGD (165 aa)) enclose the Small GTPase Ran-type domain. A GTP-binding site is contributed by 19 to 26 (DGGVGKTT). The switch-I stretch occupies residues 38-46 (KRYIATQGV). GTP-binding positions include Gly69, 123–126 (NKVD), and 151–153 (SAK). Residues 69-85 (GQEKLGGLREGYYIGAN) form a switch-II region.

Belongs to the small GTPase superfamily. Ran family. As to quaternary structure, monomer. Found in a nuclear export complex with RanGTP, exportin and pre-miRNA.

The protein resides in the nucleus. GTP-binding protein involved in nucleocytoplasmic transport. Required for the import of protein into the nucleus and also for RNA export. Involved in chromatin condensation and control of cell cycle. The sequence is that of GTP-binding nuclear protein Ran from Tetrahymena thermophila.